Reading from the N-terminus, the 249-residue chain is Aspartate/glutamate leucyltransferase (249 aa).

Belongs to the R-transferase family. Bpt subfamily.

The protein resides in the cytoplasm. The catalysed reaction is N-terminal L-glutamyl-[protein] + L-leucyl-tRNA(Leu) = N-terminal L-leucyl-L-glutamyl-[protein] + tRNA(Leu) + H(+). It catalyses the reaction N-terminal L-aspartyl-[protein] + L-leucyl-tRNA(Leu) = N-terminal L-leucyl-L-aspartyl-[protein] + tRNA(Leu) + H(+). Its function is as follows. Functions in the N-end rule pathway of protein degradation where it conjugates Leu from its aminoacyl-tRNA to the N-termini of proteins containing an N-terminal aspartate or glutamate. This is Aspartate/glutamate leucyltransferase from Azorhizobium caulinodans (strain ATCC 43989 / DSM 5975 / JCM 20966 / LMG 6465 / NBRC 14845 / NCIMB 13405 / ORS 571).